The chain runs to 278 residues: Leucine-rich repeat-containing protein 10 (278 aa).

LRR repeat units lie at residues 30–51, 52–74, 76–97, 98–121, 123–143, 144–166, 167–189, and 191–213; these read LDRMVDLSGSQLRRFPVHVCSF, QELVKLYLSDNRLNSLPPELGQL, NLQILALDFNNFKALPQVVCTL, KQLCILYLGNNKLCDLPRELSLLQ, LRTLWVEANYLTKLPEVVCEL, SLLKTLHAGSNALRLLPGQLQRL, RELRTIWLSGNLLTDFPPVLLHM, and FLEIIDVDRNSIRYFPSLAHLSS. Residues 239 to 250 show a composition bias toward basic and acidic residues; the sequence is RWAEETPEPDPR. The segment at 239–278 is disordered; the sequence is RWAEETPEPDPRKARRYALAREESQEAQLPALPPLPPTNS. Residues 269–278 show a composition bias toward pro residues; the sequence is ALPPLPPTNS.

Its subcellular location is the nucleus. Functionally, may play important roles in cardiac development and/or cardiac function. The chain is Leucine-rich repeat-containing protein 10 (LRRC10) from Bos taurus (Bovine).